Reading from the N-terminus, the 249-residue chain is NAD(P)H-quinone oxidoreductase subunit K 2 (249 aa).

Positions 54, 55, 119, and 150 each coordinate [4Fe-4S] cluster.

This sequence belongs to the complex I 20 kDa subunit family. As to quaternary structure, NDH-1 can be composed of about 15 different subunits; different subcomplexes with different compositions have been identified which probably have different functions. Requires [4Fe-4S] cluster as cofactor.

The protein localises to the cell inner membrane. It carries out the reaction a plastoquinone + NADH + (n+1) H(+)(in) = a plastoquinol + NAD(+) + n H(+)(out). The catalysed reaction is a plastoquinone + NADPH + (n+1) H(+)(in) = a plastoquinol + NADP(+) + n H(+)(out). In terms of biological role, NDH-1 shuttles electrons from an unknown electron donor, via FMN and iron-sulfur (Fe-S) centers, to quinones in the respiratory and/or the photosynthetic chain. The immediate electron acceptor for the enzyme in this species is believed to be plastoquinone. Couples the redox reaction to proton translocation, and thus conserves the redox energy in a proton gradient. Cyanobacterial NDH-1 also plays a role in inorganic carbon-concentration. This is NAD(P)H-quinone oxidoreductase subunit K 2 from Gloeobacter violaceus (strain ATCC 29082 / PCC 7421).